Reading from the N-terminus, the 284-residue chain is L-ribulose-5-phosphate 3-epimerase UlaE (284 aa).

It belongs to the L-ribulose-5-phosphate 3-epimerase family.

The enzyme catalyses L-ribulose 5-phosphate = L-xylulose 5-phosphate. Its pathway is cofactor degradation; L-ascorbate degradation; D-xylulose 5-phosphate from L-ascorbate: step 3/4. Its function is as follows. Catalyzes the isomerization of L-xylulose-5-phosphate to L-ribulose-5-phosphate. Is involved in the anaerobic L-ascorbate utilization. The sequence is that of L-ribulose-5-phosphate 3-epimerase UlaE from Escherichia coli (strain SMS-3-5 / SECEC).